We begin with the raw amino-acid sequence, 437 residues long: Putative metabolite transport protein NicT (437 aa).

The next 12 helical transmembrane spans lie at 28–48, 66–86, 93–113, 123–143, 152–172, 189–209, 254–274, 290–310, 320–340, 347–367, 374–394, and 411–431; these read LIPF…NVGF, LGAG…NLIL, LWIA…MFVT, FLLG…LTMW, IIAL…PISG, WLFL…FWAL, VWML…MGFW, IGLL…MIGA, WHII…TLFS, VVLF…FFSL, GTAA…AGLV, and AALW…IALP.

It belongs to the major facilitator superfamily.

It localises to the membrane. Functionally, probable transporter, possibly involved in the aerobic nicotinate degradation pathway. This Pseudomonas putida (strain ATCC 47054 / DSM 6125 / CFBP 8728 / NCIMB 11950 / KT2440) protein is Putative metabolite transport protein NicT (nicT).